Here is a 260-residue protein sequence, read N- to C-terminus: 33 kDa inner dynein arm light chain, axonemal (260 aa).

The tract at residues 1–66 (MIPPNASLVK…PVESQKAQQT (66 aa)) is disordered. Residues 177 to 260 (MRKALQAEQG…LEGIIAPNKK (84 aa)) adopt a coiled-coil conformation.

It belongs to the inner dynein arm light chain family. In terms of processing, may undergo some post-translational modifications that shift its mobility on SDS gels.

Its function is as follows. May play a dynamic role in flagellar motility. This is 33 kDa inner dynein arm light chain, axonemal from Strongylocentrotus purpuratus (Purple sea urchin).